The chain runs to 282 residues: Cell division protein DivIB (282 aa).

At 1-59 (MLDDRSAIEHHKYSQRLTELERRSAAAQQRQQKKKPPKMHVGNKIRGIKIKRYVSNGER) the chain is on the cytoplasmic side. Residues 19-41 (ELERRSAAAQQRQQKKKPPKMHV) are disordered. Positions 31–41 (QQKKKPPKMHV) are enriched in basic residues. Residues 60–80 (VLKLVVLFSAILLFMLYIISP) form a helical membrane-spanning segment. Residues 81–282 (LSKITTLHVT…YSYDYGSKDK (202 aa)) are Extracellular-facing. A POTRA domain is found at 82–153 (SKITTLHVTG…QSLQISVKEN (72 aa)).

Belongs to the FtsQ/DivIB family. DivIB subfamily.

Its subcellular location is the cell membrane. Its function is as follows. Cell division protein that may be involved in stabilizing or promoting the assembly of the division complex. The polypeptide is Cell division protein DivIB (Limosilactobacillus reuteri (strain ATCC 55730 / SD2112) (Lactobacillus reuteri)).